We begin with the raw amino-acid sequence, 171 residues long: Shikimate kinase (171 aa).

14–19 (GAGKST) serves as a coordination point for ATP. Ser-18 serves as a coordination point for Mg(2+). Substrate is bound by residues Asp-36, Arg-60, and Gly-82. Arg-120 lines the ATP pocket. Arg-139 lines the substrate pocket. Gln-156 contributes to the ATP binding site.

This sequence belongs to the shikimate kinase family. Monomer. Mg(2+) serves as cofactor.

The protein resides in the cytoplasm. The catalysed reaction is shikimate + ATP = 3-phosphoshikimate + ADP + H(+). The protein operates within metabolic intermediate biosynthesis; chorismate biosynthesis; chorismate from D-erythrose 4-phosphate and phosphoenolpyruvate: step 5/7. Catalyzes the specific phosphorylation of the 3-hydroxyl group of shikimic acid using ATP as a cosubstrate. The polypeptide is Shikimate kinase (Shewanella denitrificans (strain OS217 / ATCC BAA-1090 / DSM 15013)).